The sequence spans 217 residues: Ribulose-phosphate 3-epimerase (217 aa).

Serine 7 serves as a coordination point for substrate. Residues histidine 32, aspartate 34, and histidine 65 each contribute to the a divalent metal cation site. The active-site Proton acceptor is the aspartate 34. Substrate is bound by residues histidine 65, 141 to 144 (GFGG), 175 to 177 (DGG), and 197 to 198 (GS). Aspartate 175 contributes to the a divalent metal cation binding site. The active-site Proton donor is aspartate 175.

This sequence belongs to the ribulose-phosphate 3-epimerase family. It depends on a divalent metal cation as a cofactor.

The catalysed reaction is D-ribulose 5-phosphate = D-xylulose 5-phosphate. The protein operates within carbohydrate degradation. Functionally, catalyzes the reversible epimerization of D-ribulose 5-phosphate to D-xylulose 5-phosphate. This Bacillus subtilis (strain 168) protein is Ribulose-phosphate 3-epimerase.